Reading from the N-terminus, the 158-residue chain is NAD(P)H-quinone oxidoreductase subunit N (158 aa).

It belongs to the complex I NdhN subunit family. As to quaternary structure, NDH-1 can be composed of about 15 different subunits; different subcomplexes with different compositions have been identified which probably have different functions.

The protein resides in the cellular thylakoid membrane. The catalysed reaction is a plastoquinone + NADH + (n+1) H(+)(in) = a plastoquinol + NAD(+) + n H(+)(out). It catalyses the reaction a plastoquinone + NADPH + (n+1) H(+)(in) = a plastoquinol + NADP(+) + n H(+)(out). In terms of biological role, NDH-1 shuttles electrons from an unknown electron donor, via FMN and iron-sulfur (Fe-S) centers, to quinones in the respiratory and/or the photosynthetic chain. The immediate electron acceptor for the enzyme in this species is believed to be plastoquinone. Couples the redox reaction to proton translocation, and thus conserves the redox energy in a proton gradient. Cyanobacterial NDH-1 also plays a role in inorganic carbon-concentration. This is NAD(P)H-quinone oxidoreductase subunit N from Crocosphaera subtropica (strain ATCC 51142 / BH68) (Cyanothece sp. (strain ATCC 51142)).